Reading from the N-terminus, the 455-residue chain is Glutamyl-tRNA(Gln) amidotransferase subunit A (455 aa).

Residues K74 and S149 each act as charge relay system in the active site. The active-site Acyl-ester intermediate is S173.

The protein belongs to the amidase family. GatA subfamily. As to quaternary structure, heterotrimer of A, B and C subunits.

It carries out the reaction L-glutamyl-tRNA(Gln) + L-glutamine + ATP + H2O = L-glutaminyl-tRNA(Gln) + L-glutamate + ADP + phosphate + H(+). Allows the formation of correctly charged Gln-tRNA(Gln) through the transamidation of misacylated Glu-tRNA(Gln) in organisms which lack glutaminyl-tRNA synthetase. The reaction takes place in the presence of glutamine and ATP through an activated gamma-phospho-Glu-tRNA(Gln). In Methanosphaera stadtmanae (strain ATCC 43021 / DSM 3091 / JCM 11832 / MCB-3), this protein is Glutamyl-tRNA(Gln) amidotransferase subunit A.